A 162-amino-acid polypeptide reads, in one-letter code: Protein-export protein SecB (162 aa).

The protein belongs to the SecB family. Homotetramer, a dimer of dimers. One homotetramer interacts with 1 SecA dimer.

The protein resides in the cytoplasm. One of the proteins required for the normal export of preproteins out of the cell cytoplasm. It is a molecular chaperone that binds to a subset of precursor proteins, maintaining them in a translocation-competent state. It also specifically binds to its receptor SecA. This Legionella pneumophila (strain Paris) protein is Protein-export protein SecB.